A 350-amino-acid polypeptide reads, in one-letter code: Twinfilin-1 (350 aa).

S2 is subject to N-acetylserine. The 138-residue stretch at 2 to 139 folds into the ADF-H 1 domain; sequence SHQTGIQASE…SLHGYKKYLL (138 aa). A phosphoserine mark is found at S143 and S277. An ADF-H 2 domain is found at 175–313; that stretch reads LQGVAFPISR…TADFLYDEVH (139 aa). Y309 bears the Phosphotyrosine mark. A disordered region spans residues 317-350; sequence HAHKQSFAKPKGPAGKRGIRRLIRGPAEAEATTD. Phosphothreonine is present on T349.

The protein belongs to the actin-binding proteins ADF family. Twinfilin subfamily. Interacts with G-actin; ADP-actin form and capping protein (CP). May also be able to interact with TWF2 and phosphoinositides, PI(4,5)P2. When bound to PI(4,5)P2, it is down-regulated. Interacts with ACTG1. Phosphorylated on serine and threonine residues. In terms of tissue distribution, widely expressed with highest levels in brain, liver and kidney. Also expressed in heart, lung and testis. Not detected in spleen or skeletal muscle.

The protein localises to the cytoplasm. Its subcellular location is the cytoskeleton. Its function is as follows. Actin-binding protein involved in motile and morphological processes. Inhibits actin polymerization, likely by sequestering G-actin. By capping the barbed ends of filaments, it also regulates motility. Seems to play an important role in clathrin-mediated endocytosis and distribution of endocytic organelles. This Mus musculus (Mouse) protein is Twinfilin-1 (Twf1).